Here is a 267-residue protein sequence, read N- to C-terminus: Staphylococcal secretory antigen ssaA2 (267 aa).

Positions 1 to 27 are cleaved as a signal peptide; sequence MKKIATATIATAGFATIAIASGNQAHA. A run of 7 repeats spans residues 83–85, 86–88, 89–91, 95–97, 101–103, 104–106, and 113–115. The segment at 83–115 is 7 X 3 AA repeats of Y-[NS]-N; sequence YNNYNNYNNGYSYNNYSRYNNYSNNNQSYNYNN. A Peptidase C51 domain is found at 146–267; that stretch reads MAPSSNGRSI…SQAAGYNFIH (122 aa).

It is found in the secreted. Functionally, not known; immunogenic protein. This chain is Staphylococcal secretory antigen ssaA2 (ssaA2), found in Staphylococcus aureus (strain NCTC 8325 / PS 47).